We begin with the raw amino-acid sequence, 450 residues long: Pancreatic triacylglycerol lipase (450 aa).

Intrachain disulfides connect Cys-4–Cys-10, Cys-91–Cys-102, and Cys-91–Cys-104. The active-site Nucleophile is the Ser-153. Asn-167 carries N-linked (GlcNAc...) asparagine glycosylation. Asp-177 acts as the Charge relay system in catalysis. Positions 188, 191, 193, and 196 each coordinate Ca(2+). A disulfide bridge links Cys-238 with Cys-262. The Charge relay system role is filled by His-264. Disulfide bonds link Cys-286–Cys-297, Cys-300–Cys-305, and Cys-434–Cys-450. Residues 339 to 450 form the PLAT domain; sequence WRYKVSVTLS…EEVLLTLNPC (112 aa).

This sequence belongs to the AB hydrolase superfamily. Lipase family. As to quaternary structure, forms a 1:1 stoichiometric complex with (pro)colipase/CLPS.

It localises to the secreted. It catalyses the reaction a triacylglycerol + H2O = a diacylglycerol + a fatty acid + H(+). The enzyme catalyses 1,2,3-tributanoylglycerol + H2O = dibutanoylglycerol + butanoate + H(+). It carries out the reaction 1,2,3-tri-(9Z-octadecenoyl)-glycerol + H2O = di-(9Z)-octadecenoylglycerol + (9Z)-octadecenoate + H(+). The catalysed reaction is all-trans-retinyl hexadecanoate + H2O = all-trans-retinol + hexadecanoate + H(+). It catalyses the reaction 1,2-di-(9Z-octadecenoyl)-glycerol + H2O = (9Z-octadecenoyl)-glycerol + (9Z)-octadecenoate + H(+). Inhibited by bile salts, is reactivated by (pro)colipase/CLPS. Its function is as follows. Plays an important role in fat metabolism. It preferentially splits the esters of long-chain fatty acids at positions 1 and 3, producing mainly 2-monoacylglycerol and free fatty acids, and shows considerably higher activity against insoluble emulsified substrates than against soluble ones. The sequence is that of Pancreatic triacylglycerol lipase (PNLIP) from Sus scrofa (Pig).